Here is a 403-residue protein sequence, read N- to C-terminus: 8-amino-7-oxononanoate synthase (403 aa).

Substrate is bound at residue arginine 25. Residue 112–113 (GY) participates in pyridoxal 5'-phosphate binding. Histidine 137 is a binding site for substrate. Serine 182, histidine 210, and threonine 239 together coordinate pyridoxal 5'-phosphate. Residue lysine 242 is modified to N6-(pyridoxal phosphate)lysine. A substrate-binding site is contributed by threonine 358.

Belongs to the class-II pyridoxal-phosphate-dependent aminotransferase family. BioF subfamily. As to quaternary structure, homodimer. Requires pyridoxal 5'-phosphate as cofactor.

The catalysed reaction is 6-carboxyhexanoyl-[ACP] + L-alanine + H(+) = (8S)-8-amino-7-oxononanoate + holo-[ACP] + CO2. It functions in the pathway cofactor biosynthesis; biotin biosynthesis. Catalyzes the decarboxylative condensation of pimeloyl-[acyl-carrier protein] and L-alanine to produce 8-amino-7-oxononanoate (AON), [acyl-carrier protein], and carbon dioxide. The chain is 8-amino-7-oxononanoate synthase from Marinomonas sp. (strain MWYL1).